Consider the following 490-residue polypeptide: Cytochrome P450 2C14 (490 aa).

C435 contacts heme.

Belongs to the cytochrome P450 family. Heme is required as a cofactor.

Its subcellular location is the endoplasmic reticulum membrane. It is found in the microsome membrane. The catalysed reaction is an organic molecule + reduced [NADPH--hemoprotein reductase] + O2 = an alcohol + oxidized [NADPH--hemoprotein reductase] + H2O + H(+). In terms of biological role, cytochromes P450 are a group of heme-thiolate monooxygenases. In liver microsomes, this enzyme is involved in an NADPH-dependent electron transport pathway. It oxidizes a variety of structurally unrelated compounds, including steroids, fatty acids, and xenobiotics. The chain is Cytochrome P450 2C14 (CYP2C14) from Oryctolagus cuniculus (Rabbit).